The chain runs to 167 residues: Ion-translocating oxidoreductase complex subunit B (167 aa).

Residues 1-22 (MITLIIFSFLSFLLGIILSFTA) are hydrophobic. The region spanning 28 to 87 (QEDPIVAIVNELLPQSQCAQCGYSGCYPYAKAIVENSEKINKCIPGGTDLISAISSVLSI) is the 4Fe-4S domain. Cys45, Cys48, Cys53, Cys70, Cys113, Cys116, Cys119, Cys123, Cys143, Cys146, Cys149, and Cys153 together coordinate [4Fe-4S] cluster. 2 4Fe-4S ferredoxin-type domains span residues 104-133 (NTVLINESNCVGCSKCASFCPVDAIVGAPN) and 134-163 (FIHTVLQEFCTGCNICLLHCPTNCIEIKKE).

The protein belongs to the 4Fe4S bacterial-type ferredoxin family. RnfB subfamily. As to quaternary structure, the complex is composed of six subunits: RnfA, RnfB, RnfC, RnfD, RnfE and RnfG. The cofactor is [4Fe-4S] cluster.

It localises to the cell inner membrane. Its function is as follows. Part of a membrane-bound complex that couples electron transfer with translocation of ions across the membrane. The chain is Ion-translocating oxidoreductase complex subunit B from Buchnera aphidicola subsp. Acyrthosiphon pisum (strain 5A).